A 373-amino-acid chain; its full sequence is Probable jasmonic acid carboxyl methyltransferase 2 (373 aa).

An S-adenosyl-L-homocysteine-binding site is contributed by tyrosine 18. Glutamine 25 is a binding site for jasmonate. S-adenosyl-L-homocysteine-binding residues include cysteine 59, asparagine 64, aspartate 96, leucine 97, serine 135, and phenylalanine 136. Histidine 156 and tryptophan 157 together coordinate jasmonate. Residues asparagine 174, aspartate 260, phenylalanine 262, and asparagine 263 each coordinate Mg(2+).

This sequence belongs to the methyltransferase superfamily. Type-7 methyltransferase family. The cofactor is Mg(2+).

The protein resides in the cytoplasm. It is found in the nucleus. It carries out the reaction jasmonate + S-adenosyl-L-methionine = methyl (-)-jasmonate + S-adenosyl-L-homocysteine. Its pathway is lipid metabolism; oxylipin biosynthesis. In terms of biological role, catalyzes the methylation of jasmonate into methyljasmonate, a plant volatile that acts as an important cellular regulator mediating diverse developmental processes and defense responses. This chain is Probable jasmonic acid carboxyl methyltransferase 2, found in Theobroma cacao (Cacao).